We begin with the raw amino-acid sequence, 856 residues long: MVSRSCANFLDLSSWDLLDFPQTPRTLPRVMTVPGIITDVDGDTTSEVTSTSGGSRERKIIVANMLPLQSKRDAETGKWCFNWDEDSLQLQLRDGFSSETEFLYVGSLNVDIETNEQEEVSQKLLEEFNCVATFLSQELQEMFYLGFCKHQLWPLFHYMLPMFPDHGDRFDRRLWQAYVSANKIFSDRVMEVINPEDDYVWIQDYHLMVLPTFLRKRFNRIKLGFFLHSPFPSSEIYRTLPVRDEILRGLLNCDLIGFHTFDYARHFLSCCSRMLGLDYESKRGHIGLDYFGRTVYIKILPVGVHMGRLESVLSLDSTAAKTKEIQEQFKGKKLVLGIDDMDIFKGISLKLIAMEHLFETYWHLKGKVVLVQIVNPARSSGKDVEEAKRETYETARRINERYGTSDYKPIVLIDRLVPRSEKTAYYAAADCCLVNAVRDGMNLVPYKYIVCRQGTRSNKAVVDSSPRTSTLVVSEFIGCSPSLSGAIRVNPWDVDAVAEAVNSALKMSETEKQLRHEKHYHYISTHDVGYWAKSFMQDLERACRDHYSKRCWGIGFGLGFRVLSLSPSFRKLSVEHIVPVYRKTQRRAIFLDYDGTLVPESSIVQDPSNEVVSVLKALCEDPNNTVFIVSGRGRESLSNWLSPCENLGIAAEHGYFIRWKSKDEWETCYSPTDTEWRSMVEPVMRSYMEATDGTSIEFKESALVWHHQDADPDFGSCQAKEMLDHLESVLANEPVVVKRGQHIVEVKPQGVSKGLAAEKVIREMVERGEPPEMVMCIGDDRSDEDMFESILSTVTNPELLVQPEVFACTVGRKPSKAKYFLDDEADVLKLLRGLGDSSSSLKPSSSHTQVAFESIV.

Serine 5 is modified (phosphoserine). A Phosphothreonine modification is found at threonine 32. Residues 57-541 form a glycosyltransferase region; the sequence is ERKIIVANML…AKSFMQDLER (485 aa).

This sequence in the N-terminal section; belongs to the glycosyltransferase 20 family. It in the C-terminal section; belongs to the trehalose phosphatase family. Expressed in leaves, roots, stems and flowers.

It catalyses the reaction D-glucose 6-phosphate + UDP-alpha-D-glucose = alpha,alpha-trehalose 6-phosphate + UDP + H(+). This is Probable alpha,alpha-trehalose-phosphate synthase [UDP-forming] 8 (TPS8) from Arabidopsis thaliana (Mouse-ear cress).